Reading from the N-terminus, the 118-residue chain is Vesicle-associated membrane protein 1 (118 aa).

Residues 1–36 are disordered; the sequence is MSAPAQPPAEGTEGTAPGGGPPGPPPNMTSNRRLQQ. At 1–96 the chain is on the cytoplasmic side; the sequence is MSAPAQPPAE…KRKYWWKNCK (96 aa). The v-SNARE coiled-coil homology domain occupies 33-93; the sequence is RLQQTQAQVE…AKLKRKYWWK (61 aa). Position 63 is a phosphoserine (serine 63). A helical; Anchor for type IV membrane protein membrane pass occupies residues 97-116; it reads MMIMLGAICAIIVVVIVIYF. Over 117 to 118 the chain is Vesicular; that stretch reads FT.

The protein belongs to the synaptobrevin family. As to quaternary structure, interacts with VAPA and VAPB. (Microbial infection) Targeted and hydrolyzed by C.botulinum neurotoxin type B (BoNT/B, botB) which probably hydrolyzes the 78-Gln-|-Phe-79 bond and inhibits neurotransmitter release. Post-translationally, (Microbial infection) Targeted and hydrolyzed by C.botulinum neurotoxin type D (BoNT/D, botD) which probably hydrolyzes the 61-Arg-|-Leu-62 bond and inhibits neurotransmitter release. BoNT/D has low catalytic activity on this protein due to its sequence. Note that humans are not known to be infected by C.botulinum type D. In terms of processing, (Microbial infection) Targeted and hydrolyzed by C.botulinum neurotoxin type F (BoNT/F, botF) which probably hydrolyzes the 60-Gln-|-Lys-61 bond and inhibits neurotransmitter release. (Microbial infection) Targeted and hydrolyzed by C.botulinum neurotoxin type X (BoNT/X) which probably hydrolyzes the 68-Arg-|-Ala-69 bond and inhibits neurotransmitter release. It remains unknown whether BoNT/X is ever produced, or what organisms it targets. As to expression, nervous system, skeletal muscle and adipose tissue.

It localises to the cytoplasmic vesicle. The protein resides in the secretory vesicle. Its subcellular location is the synaptic vesicle membrane. It is found in the synapse. The protein localises to the synaptosome. It localises to the cytoplasmic vesicle membrane. The protein resides in the mitochondrion outer membrane. Functionally, involved in the targeting and/or fusion of transport vesicles to their target membrane. In Homo sapiens (Human), this protein is Vesicle-associated membrane protein 1 (VAMP1).